We begin with the raw amino-acid sequence, 316 residues long: Probable protein-L-isoaspartate O-methyltransferase (316 aa).

S-adenosyl-L-homocysteine-binding positions include 103 to 106 (ATIS), His111, Ser136, 157 to 158 (EH), 187 to 188 (DG), Thr263, and Gln268. Ser106 is a catalytic residue.

Belongs to the methyltransferase superfamily. L-isoaspartyl/D-aspartyl protein methyltransferase family.

Its subcellular location is the cytoplasm. It localises to the cytosol. It carries out the reaction [protein]-L-isoaspartate + S-adenosyl-L-methionine = [protein]-L-isoaspartate alpha-methyl ester + S-adenosyl-L-homocysteine. Its function is as follows. Initiates the repair of damaged proteins by catalyzing methyl esterification of L-isoaspartyl and D-aspartyl residues produced by spontaneous isomerization and racemization of L-aspartyl and L-asparaginyl residues in aging peptides and proteins. In Dictyostelium discoideum (Social amoeba), this protein is Probable protein-L-isoaspartate O-methyltransferase (pcmA).